A 302-amino-acid polypeptide reads, in one-letter code: Sulfate adenylyltransferase subunit 2 (302 aa).

Belongs to the PAPS reductase family. CysD subfamily. In terms of assembly, heterodimer composed of CysD, the smaller subunit, and CysN.

The catalysed reaction is sulfate + ATP + H(+) = adenosine 5'-phosphosulfate + diphosphate. It functions in the pathway sulfur metabolism; hydrogen sulfide biosynthesis; sulfite from sulfate: step 1/3. Functionally, with CysN forms the ATP sulfurylase (ATPS) that catalyzes the adenylation of sulfate producing adenosine 5'-phosphosulfate (APS) and diphosphate, the first enzymatic step in sulfur assimilation pathway. APS synthesis involves the formation of a high-energy phosphoric-sulfuric acid anhydride bond driven by GTP hydrolysis by CysN coupled to ATP hydrolysis by CysD. In Yersinia pestis bv. Antiqua (strain Nepal516), this protein is Sulfate adenylyltransferase subunit 2.